The following is a 310-amino-acid chain: Alpha/beta hydrolase domain-containing protein 17A (310 aa).

Residues 38 to 61 (VPEPEPGPGGAGAAPSGPLRTSAA) form a disordered region. Active-site charge relay system residues include Ser190, Asp255, and His284. Ser307 carries the post-translational modification Phosphoserine.

It belongs to the AB hydrolase superfamily. ABHD17 family. In terms of processing, palmitoylated on cysteine residues located in a cysteine cluster at the N-terminus which promotes membrane localization. Palmitoylation is required for post-synaptic localization and for depalmitoylating activity towards DLG4/PSD95.

It is found in the cell membrane. The protein resides in the endosome membrane. It localises to the cell projection. The protein localises to the dendritic spine. Its subcellular location is the postsynaptic density membrane. The catalysed reaction is S-hexadecanoyl-L-cysteinyl-[protein] + H2O = L-cysteinyl-[protein] + hexadecanoate + H(+). Its function is as follows. Hydrolyzes fatty acids from S-acylated cysteine residues in proteins. Has depalmitoylating activity towards NRAS. Has depalmitoylating activity towards DLG4/PSD95. May have depalmitoylating activity towars MAP6. The protein is Alpha/beta hydrolase domain-containing protein 17A of Mus musculus (Mouse).